The sequence spans 240 residues: 3-deoxy-D-manno-octulosonic acid kinase (240 aa).

D170 is a catalytic residue.

This sequence belongs to the protein kinase superfamily. KdkA/RfaP family.

The protein localises to the cell inner membrane. The catalysed reaction is an alpha-Kdo-(2-&gt;6)-lipid IVA + ATP = a 4-O-phospho-alpha-Kdo-(2-&gt;6)-lipid IVA + ADP + H(+). It participates in bacterial outer membrane biogenesis; LPS core biosynthesis. Its function is as follows. Catalyzes the ATP-dependent phosphorylation of the 3-deoxy-D-manno-octulosonic acid (Kdo) residue in Kdo-lipid IV(A) at the 4-OH position. This chain is 3-deoxy-D-manno-octulosonic acid kinase, found in Actinobacillus succinogenes (strain ATCC 55618 / DSM 22257 / CCUG 43843 / 130Z).